The following is a 528-amino-acid chain: Glutamyl-tRNA(Gln) amidotransferase subunit A, mitochondrial (528 aa).

K76 (charge relay system) is an active-site residue. The tract at residues 148–167 is disordered; sequence YREKRKQNPHSENEDSDWLI. S171 acts as the Charge relay system in catalysis. S195 serves as the catalytic Acyl-ester intermediate.

It belongs to the amidase family. GatA subfamily. As to quaternary structure, subunit of the heterotrimeric GatCAB amidotransferase (AdT) complex, composed of A (QRSL1), B (GATB) and C (GATC) subunits.

The protein localises to the mitochondrion. The catalysed reaction is L-glutamyl-tRNA(Gln) + L-glutamine + ATP + H2O = L-glutaminyl-tRNA(Gln) + L-glutamate + ADP + phosphate + H(+). Its function is as follows. Allows the formation of correctly charged Gln-tRNA(Gln) through the transamidation of misacylated Glu-tRNA(Gln) in the mitochondria. The reaction takes place in the presence of glutamine and ATP through an activated gamma-phospho-Glu-tRNA(Gln). In Homo sapiens (Human), this protein is Glutamyl-tRNA(Gln) amidotransferase subunit A, mitochondrial.